The following is a 471-amino-acid chain: 3-isopropylmalate dehydratase large subunit (471 aa).

The [4Fe-4S] cluster site is built by cysteine 346, cysteine 406, and cysteine 409.

It belongs to the aconitase/IPM isomerase family. LeuC type 1 subfamily. As to quaternary structure, heterodimer of LeuC and LeuD. [4Fe-4S] cluster is required as a cofactor.

It catalyses the reaction (2R,3S)-3-isopropylmalate = (2S)-2-isopropylmalate. The protein operates within amino-acid biosynthesis; L-leucine biosynthesis; L-leucine from 3-methyl-2-oxobutanoate: step 2/4. In terms of biological role, catalyzes the isomerization between 2-isopropylmalate and 3-isopropylmalate, via the formation of 2-isopropylmaleate. The protein is 3-isopropylmalate dehydratase large subunit of Bacillus pumilus (strain SAFR-032).